The sequence spans 516 residues: Cytochrome P450 monooxygenase ntnM (516 aa).

Residues 22–42 (IINVILSIAAIALIRALAISI) form a helical membrane-spanning segment. Residue Cys-453 coordinates heme.

Belongs to the cytochrome P450 family. It depends on heme as a cofactor.

The protein localises to the membrane. The protein operates within secondary metabolite biosynthesis; terpenoid biosynthesis. Cytochrome P450 monooxygenase; part of the gene cluster that mediates the biosynthesis of the meroterpenoids nectripenoids A and B, as well as cochliquninone D and isocochliquninone E. The pathway probably begins with the HR-PKS ntnH that catalyzes two chain-extension steps to form a reduced triketide, which then primes the SAT domain in the NR-PKS ntnG to initiate three more cycles of extension to give a linear hexaketide corresponding to the polyketide part of nectripenoids. The FAD-dependent monooxygenase ntnJ then performs an oxidative decarboxylation at C11 of the ntnH/ntnG product, via an electrophilic aromatic hydroxylation with concomitant ipso-decarboxylation. The membrane-bound polyprenyl transferase ntnF then introduces a farnesyl group before the FAD-dependent monooxygenase ntnK functions as the first epoxidase on terminal C12'-C13' olefin, followed by a second epoxidation on C7'-C8' catalyzed by ntnA. The terpene cyclase/mutase ntnI then initiates the sequential tricyclic ring formation through protonation of the terminal epoxide and catalyzes the regioselective and stereoselective 6/6/6-tricyclic ring formation. The cytochrome P450 monooxygenase ntnM may then hydroxylate C1'. The polypeptide is Cytochrome P450 monooxygenase ntnM (Nectria sp).